The following is a 314-amino-acid chain: tRNA pseudouridine synthase B (314 aa).

Histidine 43 is a substrate binding site. Catalysis depends on aspartate 48, which acts as the Nucleophile. Positions 76, 179, and 200 each coordinate substrate.

This sequence belongs to the pseudouridine synthase TruB family. Type 1 subfamily.

The enzyme catalyses uridine(55) in tRNA = pseudouridine(55) in tRNA. Responsible for synthesis of pseudouridine from uracil-55 in the psi GC loop of transfer RNAs. This is tRNA pseudouridine synthase B from Enterobacter sp. (strain 638).